The sequence spans 130 residues: Phosphomevalonate dehydratase small subunit (130 aa).

Catalysis depends on serine 62, which acts as the Proton acceptor.

Belongs to the AcnX type II small subunit family. Heterodimer composed of a large subunit (PMDh-L) and a small subunit (PMDh-S).

The enzyme catalyses (R)-5-phosphomevalonate = (2E)-3-methyl-5-phosphooxypent-2-enoate + H2O. It functions in the pathway isoprenoid biosynthesis; isopentenyl diphosphate biosynthesis via mevalonate pathway. Its function is as follows. Component of a hydro-lyase that catalyzes the dehydration of mevalonate 5-phosphate (MVA5P) to form trans-anhydromevalonate 5-phosphate (tAHMP). Involved in the archaeal mevalonate (MVA) pathway, which provides fundamental precursors for isoprenoid biosynthesis, such as isopentenyl diphosphate (IPP) and dimethylallyl diphosphate (DMAPP). The polypeptide is Phosphomevalonate dehydratase small subunit (Pyrococcus abyssi (strain GE5 / Orsay)).